We begin with the raw amino-acid sequence, 107 residues long: UPF0145 protein Spro_1658 (107 aa).

Belongs to the UPF0145 family.

The protein is UPF0145 protein Spro_1658 of Serratia proteamaculans (strain 568).